The sequence spans 151 residues: MKVWVDADACPGVIKEILFRVADRAKVEVTLVANHWMRIPPSPFINLKTVSSGFDVADDEIVKLLSAGDLVITADIPLASEVIDKGGVALNPRGELYTEQNIKSILNMRDFMDTMRASGVQTGGPAAIGASEKQAFGNQLDRFITKHHKPS.

The protein belongs to the UPF0178 family.

This Shewanella halifaxensis (strain HAW-EB4) protein is UPF0178 protein Shal_3046.